Consider the following 98-residue polypeptide: DNA-binding protein Fis (98 aa).

Positions 74–93 (QTRAALMLGINRSTLRKKLK) form a DNA-binding region, H-T-H motif.

This sequence belongs to the transcriptional regulatory Fis family. Homodimer.

Activates ribosomal RNA transcription. Plays a direct role in upstream activation of rRNA promoters. The protein is DNA-binding protein Fis of Buchnera aphidicola subsp. Acyrthosiphon pisum (strain 5A).